Reading from the N-terminus, the 422-residue chain is Phosphoribosylamine--glycine ligase (422 aa).

The ATP-grasp domain maps to 107–313 (KDLMKKYDIP…LVQVLLDLLD (207 aa)). An ATP-binding site is contributed by 133–194 (VQEKGAPIVI…EEYLSGEEFS (62 aa)). Mg(2+) contacts are provided by E283 and N285.

This sequence belongs to the GARS family. The cofactor is Mg(2+). Mn(2+) serves as cofactor.

The catalysed reaction is 5-phospho-beta-D-ribosylamine + glycine + ATP = N(1)-(5-phospho-beta-D-ribosyl)glycinamide + ADP + phosphate + H(+). The protein operates within purine metabolism; IMP biosynthesis via de novo pathway; N(1)-(5-phospho-D-ribosyl)glycinamide from 5-phospho-alpha-D-ribose 1-diphosphate: step 2/2. In Bacillus subtilis (strain 168), this protein is Phosphoribosylamine--glycine ligase.